Here is a 710-residue protein sequence, read N- to C-terminus: Early transcription factor 82 kDa subunit (710 aa).

This sequence belongs to the poxviridae VETF large subunit family. As to quaternary structure, heterodimer of a 70 kDa and a 82 kDa subunit. Part of the early transcription complex composed of ETF, RAP94/OPG109, and the DNA-directed RNA polymerase.

Its subcellular location is the virion. In terms of biological role, acts with RNA polymerase to initiate transcription from early gene promoters. Is recruited by the RPO-associated protein of 94 kDa RAP94/OPG109 to form the early transcription complex, which also contains the core RNA polymerase. ETF heterodimer binds to early gene promoters. The protein is Early transcription factor 82 kDa subunit (OPG133) of Monkeypox virus.